The following is a 321-amino-acid chain: GTP cyclohydrolase FolE2 (321 aa).

Belongs to the GTP cyclohydrolase IV family.

The enzyme catalyses GTP + H2O = 7,8-dihydroneopterin 3'-triphosphate + formate + H(+). It functions in the pathway cofactor biosynthesis; 7,8-dihydroneopterin triphosphate biosynthesis; 7,8-dihydroneopterin triphosphate from GTP: step 1/1. Its function is as follows. Converts GTP to 7,8-dihydroneopterin triphosphate. This Paracoccus denitrificans (strain Pd 1222) protein is GTP cyclohydrolase FolE2.